We begin with the raw amino-acid sequence, 120 residues long: Glycine cleavage system H protein (120 aa).

The Lipoyl-binding domain maps to 17-99 (IATVGITSHA…QGAGWFFKLK (83 aa)). Residue Lys58 is modified to N6-lipoyllysine.

The protein belongs to the GcvH family. As to quaternary structure, the glycine cleavage system is composed of four proteins: P, T, L and H. (R)-lipoate serves as cofactor.

Its function is as follows. The glycine cleavage system catalyzes the degradation of glycine. The H protein shuttles the methylamine group of glycine from the P protein to the T protein. In Agrobacterium fabrum (strain C58 / ATCC 33970) (Agrobacterium tumefaciens (strain C58)), this protein is Glycine cleavage system H protein.